Reading from the N-terminus, the 257-residue chain is Type III pantothenate kinase (257 aa).

24–31 (MIGNSRLH) contributes to the ATP binding site. Substrate-binding positions include Tyr-96 and 100 to 103 (GIDR). Asp-102 serves as the catalytic Proton acceptor. Asp-122 is a K(+) binding site. ATP is bound at residue Thr-125. Thr-180 is a substrate binding site.

Belongs to the type III pantothenate kinase family. Homodimer. Requires NH4(+) as cofactor. K(+) is required as a cofactor.

The protein localises to the cytoplasm. The catalysed reaction is (R)-pantothenate + ATP = (R)-4'-phosphopantothenate + ADP + H(+). It participates in cofactor biosynthesis; coenzyme A biosynthesis; CoA from (R)-pantothenate: step 1/5. In terms of biological role, catalyzes the phosphorylation of pantothenate (Pan), the first step in CoA biosynthesis. This is Type III pantothenate kinase from Synechocystis sp. (strain ATCC 27184 / PCC 6803 / Kazusa).